The following is a 220-amino-acid chain: Type IV major pilin protein PilA (220 aa).

Residues 1 to 12 (MRVSRFNPRNRG) constitute a propeptide, leader sequence. Residue F13 is modified to N-methylphenylalanine. Residues 13–33 (FTLIELMIVVAIIGILAAIAI) form a helical membrane-spanning segment.

Belongs to the N-Me-Phe pilin family.

The protein localises to the fimbrium. The protein resides in the membrane. The two-component PilS2/PilR2 is required for proper assembly of T4P and regulation. Functionally, major component of the type IV pili that are required for social gliding motility through cycles of extension and retraction. Extended pili are composed of thousands of copies of PilA and retract upon binding to extracellular polysaccharides and thereby pull the cell forward. The protein is Type IV major pilin protein PilA (pilA) of Myxococcus xanthus (strain DK1622).